The following is a 567-amino-acid chain: Zinc finger protein 512 (567 aa).

A disordered region spans residues 1–32 (MSSRLGAVPATSGPTTFKQQRSTRIVGAKNSR). Residues 12 to 23 (SGPTTFKQQRST) show a composition bias toward polar residues. Residues K18 and K84 each participate in a glycyl lysine isopeptide (Lys-Gly) (interchain with G-Cter in SUMO2) cross-link. The segment at 86 to 148 (AATSHVEGSG…QARRIRKEPP (63 aa)) is disordered. Basic residues predominate over residues 119-130 (KKHKLYGRKQRP). A C2H2-type 1 zinc finger spans residues 197 to 220 (FTCHHCGKQLRSLAGMKYHVMANH). K227 is covalently cross-linked (Glycyl lysine isopeptide (Lys-Gly) (interchain with G-Cter in SUMO2)). The C2H2-type 2 zinc-finger motif lies at 287-310 (LKCHHCGKPYRSKAGLAYHLRSEH). A Glycyl lysine isopeptide (Lys-Gly) (interchain with G-Cter in SUMO2) cross-link involves residue K333. Residues 406-430 (IQCPNQGCEAVYSSVSGLKAHLGSC) form a C2H2-type 3; atypical zinc finger. The segment at 440–463 (YKCLLCQKEFVSESGVKYHINSVH) adopts a C2H2-type 4 zinc-finger fold. The tract at residues 486–567 (QRQQEEEKRR…PKTNHKRGRK (82 aa)) is disordered. Positions 495 to 508 (RQQHRSRRSLRRRQ) are enriched in basic residues. Positions 523–532 (VGKDQRRNNE) are enriched in basic and acidic residues. The span at 556 to 567 (KPPKTNHKRGRK) shows a compositional bias: basic residues.

This sequence belongs to the krueppel C2H2-type zinc-finger protein family.

It localises to the nucleus. May be involved in transcriptional regulation. The polypeptide is Zinc finger protein 512 (ZNF512) (Homo sapiens (Human)).